Here is a 448-residue protein sequence, read N- to C-terminus: Nicotinate phosphoribosyltransferase pncB1 (448 aa).

Residues 1 to 21 form a disordered region; the sequence is MGPPPAARRREGEPDNQDPAG. His212 carries the phosphohistidine modification. Residues 353–372 are disordered; sequence RSSYKESPGGRKEALRRSRA.

Belongs to the NAPRTase family. Transiently phosphorylated on a His residue during the reaction cycle. Phosphorylation strongly increases the affinity for substrates and increases the rate of nicotinate D-ribonucleotide production. Dephosphorylation regenerates the low-affinity form of the enzyme, leading to product release.

It catalyses the reaction nicotinate + 5-phospho-alpha-D-ribose 1-diphosphate + ATP + H2O = nicotinate beta-D-ribonucleotide + ADP + phosphate + diphosphate. It functions in the pathway cofactor biosynthesis; NAD(+) biosynthesis; nicotinate D-ribonucleotide from nicotinate: step 1/1. Its function is as follows. Involved in the Preiss-Handler pathway, which is a recycling route that permits the salvage of free nicotinamide (NM) and nicotinic acid (Na) involved in the NAD biosynthesis. Catalyzes the synthesis of beta-nicotinate D-ribonucleotide from nicotinate and 5-phospho-D-ribose 1-phosphate at the expense of ATP. It is not able to use nicotinamide. PncB1 contributes to basal NAD level. The chain is Nicotinate phosphoribosyltransferase pncB1 (pncB1) from Mycobacterium tuberculosis (strain ATCC 25618 / H37Rv).